Here is a 208-residue protein sequence, read N- to C-terminus: Ribonuclease HII (208 aa).

The 193-residue stretch at Gly-11 to Lys-203 folds into the RNase H type-2 domain. The a divalent metal cation site is built by Asp-17, Glu-18, and Asp-112.

Belongs to the RNase HII family. Mn(2+) is required as a cofactor. The cofactor is Mg(2+).

Its subcellular location is the cytoplasm. The catalysed reaction is Endonucleolytic cleavage to 5'-phosphomonoester.. Its function is as follows. Endonuclease that specifically degrades the RNA of RNA-DNA hybrids. This Corynebacterium jeikeium (strain K411) protein is Ribonuclease HII.